A 251-amino-acid chain; its full sequence is MLTKRIIPCLDIKNGRTVKGVNFLDLKDAGDPVALAQKYAEEGADELVFLDISATEEDRKTVIDLVRKVSETINIPFTVGGGISSVNDVEILLKNGADKVSINSSAVKNPQLINDLASAFGSQCIVVAIDAKQINGNWKVHLVGGKVATEIDLFDWAKEVENRGAGEILFTSMDHDGTKNGFANEALAKLSQTVNIPIIASGGAGTMQHFADAFLLGNADAALAASVFHFQEIRIQDLKIALKNNTIQIRL.

Residues aspartate 11 and aspartate 130 contribute to the active site.

The protein belongs to the HisA/HisF family. Heterodimer of HisH and HisF.

The protein localises to the cytoplasm. It catalyses the reaction 5-[(5-phospho-1-deoxy-D-ribulos-1-ylimino)methylamino]-1-(5-phospho-beta-D-ribosyl)imidazole-4-carboxamide + L-glutamine = D-erythro-1-(imidazol-4-yl)glycerol 3-phosphate + 5-amino-1-(5-phospho-beta-D-ribosyl)imidazole-4-carboxamide + L-glutamate + H(+). The protein operates within amino-acid biosynthesis; L-histidine biosynthesis; L-histidine from 5-phospho-alpha-D-ribose 1-diphosphate: step 5/9. In terms of biological role, IGPS catalyzes the conversion of PRFAR and glutamine to IGP, AICAR and glutamate. The HisF subunit catalyzes the cyclization activity that produces IGP and AICAR from PRFAR using the ammonia provided by the HisH subunit. The chain is Imidazole glycerol phosphate synthase subunit HisF from Flavobacterium psychrophilum (strain ATCC 49511 / DSM 21280 / CIP 103535 / JIP02/86).